Here is a 222-residue protein sequence, read N- to C-terminus: Histidinol-phosphatase (222 aa).

The active-site Nucleophile is Asp-8. 3 residues coordinate Mg(2+): Asp-8, Asp-10, and Asp-184. Asp-10 acts as the Proton donor in catalysis.

The protein belongs to the HAD-like hydrolase superfamily. SerB family. Mg(2+) is required as a cofactor.

The catalysed reaction is L-histidinol phosphate + H2O = L-histidinol + phosphate. Its pathway is amino-acid biosynthesis; L-histidine biosynthesis; L-histidine from 5-phospho-alpha-D-ribose 1-diphosphate: step 8/9. In terms of biological role, catalyzes the dephosphorylation of histidinol-phosphate to histidinol, the direct precursor of histidine. This is Histidinol-phosphatase from Neisseria meningitidis serogroup C (strain 8013).